The sequence spans 372 residues: 4-hydroxy-3-methylbut-2-en-1-yl diphosphate synthase (flavodoxin) (372 aa).

Residues C270, C273, C305, and E312 each coordinate [4Fe-4S] cluster.

Belongs to the IspG family. [4Fe-4S] cluster is required as a cofactor.

The catalysed reaction is (2E)-4-hydroxy-3-methylbut-2-enyl diphosphate + oxidized [flavodoxin] + H2O + 2 H(+) = 2-C-methyl-D-erythritol 2,4-cyclic diphosphate + reduced [flavodoxin]. Its pathway is isoprenoid biosynthesis; isopentenyl diphosphate biosynthesis via DXP pathway; isopentenyl diphosphate from 1-deoxy-D-xylulose 5-phosphate: step 5/6. Its function is as follows. Converts 2C-methyl-D-erythritol 2,4-cyclodiphosphate (ME-2,4cPP) into 1-hydroxy-2-methyl-2-(E)-butenyl 4-diphosphate. The chain is 4-hydroxy-3-methylbut-2-en-1-yl diphosphate synthase (flavodoxin) from Citrobacter koseri (strain ATCC BAA-895 / CDC 4225-83 / SGSC4696).